Reading from the N-terminus, the 224-residue chain is MNKQASGKDTGNRGAVTGGKQMDGFADMLTNLLSKVGISNHEVFTSEKPHLPGYFRATKKWDFLVVKTNDRGEKYLLAAVELKSHVGPSFGNNLNNRVEESLGSATDIWIAFREKAFKNSRAPWLGYLMLLEDCPQSTKPVKVDEPHFEVFPEFKNASYAKRYELFCRKIVLERKYTSSCLLMSDKQGGLQGIYKEPANDLKIYPFLYSLLTHVATEAALISSS.

This sequence belongs to the XhoI type II restriction endonuclease family.

The catalysed reaction is Endonucleolytic cleavage of DNA to give specific double-stranded fragments with terminal 5'-phosphates.. Functionally, a P subtype restriction enzyme that recognizes the double-stranded sequence 5'-CTCGAG-3' and cleaves after C-1. This Geobacillus stearothermophilus (Bacillus stearothermophilus) protein is Type II restriction enzyme BstVI.